The primary structure comprises 345 residues: Uroporphyrinogen decarboxylase (345 aa).

Substrate is bound by residues 27 to 31, Phe46, Asp76, Tyr152, Ser207, and His320; that span reads RQAGR.

The protein belongs to the uroporphyrinogen decarboxylase family. As to quaternary structure, homodimer.

The protein resides in the cytoplasm. The catalysed reaction is uroporphyrinogen III + 4 H(+) = coproporphyrinogen III + 4 CO2. Its pathway is porphyrin-containing compound metabolism; protoporphyrin-IX biosynthesis; coproporphyrinogen-III from 5-aminolevulinate: step 4/4. Functionally, catalyzes the decarboxylation of four acetate groups of uroporphyrinogen-III to yield coproporphyrinogen-III. The polypeptide is Uroporphyrinogen decarboxylase (Oceanobacillus iheyensis (strain DSM 14371 / CIP 107618 / JCM 11309 / KCTC 3954 / HTE831)).